The chain runs to 392 residues: MATFPHFGTAAIHVGQEPEQWDMNQVVPPISLSSTYKQDNPGEPKGHDYSRAGNPTRDVLQKNLAALEDAKHCQVFSSGLAATSAIINLLKYGDHIVCSDDVYGGTQRYIRRVAVPNHGLEVDSVDLTDVQNLEKAIKPNTKMVWFESPSNPLLKVVDIAAVVQTAKKANPEIVVVVDNTFMSPYFQRPISLGADVVVHSITKYINGHSDVVMGAVITDNDEFQQHLFFMQLAVGAVPSPFDCFLVNRGLKTLHIRMRAHYENALAVAKYLEANDRIESVLYPALPSHPQHEVHEKQTKGMSGMISFYLKGELQESRAFLSALKVFTLAESLGGYESLAELPSIMTHASVPAETRIVLGITDNLIRISVGIEDLDDLVADLDQALKIAIPKV.

The disordered stretch occupies residues L32–P55. The span at N40–S50 shows a compositional bias: basic and acidic residues. Positions 51, 103, and 108 each coordinate substrate. Residue K203 is modified to N6-(pyridoxal phosphate)lysine. E330 is a binding site for substrate.

The protein belongs to the trans-sulfuration enzymes family. It depends on pyridoxal 5'-phosphate as a cofactor.

It localises to the cytoplasm. It carries out the reaction L,L-cystathionine + H2O = 2-oxobutanoate + L-cysteine + NH4(+). It participates in amino-acid biosynthesis; L-cysteine biosynthesis; L-cysteine from L-homocysteine and L-serine: step 2/2. This is Putative cystathionine gamma-lyase 2 (cth-2) from Caenorhabditis elegans.